Reading from the N-terminus, the 513-residue chain is ATP synthase subunit alpha (513 aa).

ATP is bound at residue 169–176; the sequence is GDRQIGKT.

Belongs to the ATPase alpha/beta chains family. F-type ATPases have 2 components, CF(1) - the catalytic core - and CF(0) - the membrane proton channel. CF(1) has five subunits: alpha(3), beta(3), gamma(1), delta(1), epsilon(1). CF(0) has three main subunits: a(1), b(2) and c(9-12). The alpha and beta chains form an alternating ring which encloses part of the gamma chain. CF(1) is attached to CF(0) by a central stalk formed by the gamma and epsilon chains, while a peripheral stalk is formed by the delta and b chains.

The protein localises to the cell inner membrane. The enzyme catalyses ATP + H2O + 4 H(+)(in) = ADP + phosphate + 5 H(+)(out). Functionally, produces ATP from ADP in the presence of a proton gradient across the membrane. The alpha chain is a regulatory subunit. The polypeptide is ATP synthase subunit alpha (Shewanella halifaxensis (strain HAW-EB4)).